Reading from the N-terminus, the 402-residue chain is tRNA pseudouridine synthase Pus10 (402 aa).

The THUMP domain occupies 37-159; the sequence is RLRGERLVEK…QIRVHVQINP (123 aa). The Nucleophile role is filled by Asp-228. Residues Tyr-296 and Tyr-364 each contribute to the substrate site.

It belongs to the pseudouridine synthase Pus10 family.

The catalysed reaction is uridine(54) in tRNA = pseudouridine(54) in tRNA. It catalyses the reaction uridine(55) in tRNA = pseudouridine(55) in tRNA. Functionally, responsible for synthesis of pseudouridine from uracil-54 and uracil-55 in the psi GC loop of transfer RNAs. The chain is tRNA pseudouridine synthase Pus10 from Methanothermobacter marburgensis (strain ATCC BAA-927 / DSM 2133 / JCM 14651 / NBRC 100331 / OCM 82 / Marburg) (Methanobacterium thermoautotrophicum).